The sequence spans 309 residues: Tagatose-6-phosphate kinase (309 aa).

The protein belongs to the carbohydrate kinase PfkB family. LacC subfamily.

The catalysed reaction is D-tagatofuranose 6-phosphate + ATP = D-tagatofuranose 1,6-bisphosphate + ADP + H(+). It functions in the pathway carbohydrate metabolism; D-tagatose 6-phosphate degradation; D-glyceraldehyde 3-phosphate and glycerone phosphate from D-tagatose 6-phosphate: step 1/2. The protein is Tagatose-6-phosphate kinase of Streptococcus pyogenes serotype M3 (strain SSI-1).